The following is a 295-amino-acid chain: Cytidine deaminase (295 aa).

2 consecutive CMP/dCMP-type deaminase domains span residues 48-168 and 187-295; these read EDAD…FGPA and DDDE…YLSL. 89 to 91 contacts substrate; it reads NME. His-102 serves as a coordination point for Zn(2+). The Proton donor role is filled by Glu-104. Residues Cys-129 and Cys-132 each coordinate Zn(2+).

It belongs to the cytidine and deoxycytidylate deaminase family. In terms of assembly, homodimer. Zn(2+) serves as cofactor.

It carries out the reaction cytidine + H2O + H(+) = uridine + NH4(+). The enzyme catalyses 2'-deoxycytidine + H2O + H(+) = 2'-deoxyuridine + NH4(+). In terms of biological role, this enzyme scavenges exogenous and endogenous cytidine and 2'-deoxycytidine for UMP synthesis. The polypeptide is Cytidine deaminase (Vibrio cholerae serotype O1 (strain ATCC 39315 / El Tor Inaba N16961)).